The sequence spans 140 residues: Cytochrome c-type biogenesis protein CcmE (140 aa).

The Cytoplasmic portion of the chain corresponds to Met-1–Arg-7. Residues Leu-8–Glu-28 form a helical; Signal-anchor for type II membrane protein membrane-spanning segment. Topologically, residues Leu-29–Lys-140 are periplasmic. Heme is bound by residues His-121 and Tyr-125.

It belongs to the CcmE/CycJ family.

It localises to the cell inner membrane. Heme chaperone required for the biogenesis of c-type cytochromes. Transiently binds heme delivered by CcmC and transfers the heme to apo-cytochromes in a process facilitated by CcmF and CcmH. This Anaplasma marginale (strain St. Maries) protein is Cytochrome c-type biogenesis protein CcmE.